A 1305-amino-acid polypeptide reads, in one-letter code: ABC transporter FPSE_09185 (1305 aa).

N-linked (GlcNAc...) asparagine glycosylation occurs at N28. 6 consecutive transmembrane segments (helical) span residues F44 to M64, L99 to F119, R172 to T192, I199 to Y219, I277 to F297, and V312 to L332. An ABC transmembrane type-1 1 domain is found at V48–E348. One can recognise an ABC transporter 1 domain in the interval L372–E663. G407–S414 serves as a coordination point for ATP. Residues E434–Y454 form a disordered region. Positions S440–Y454 are enriched in basic and acidic residues. N468, N507, and N525 each carry an N-linked (GlcNAc...) asparagine glycan. 6 helical membrane-spanning segments follow: residues F737–L757, G780–I800, G851–I873, F877–W899, A964–Y984, and F999–V1019. One can recognise an ABC transmembrane type-1 2 domain in the interval L738–Q1025. The interval D1038 to D1057 is disordered. N-linked (GlcNAc...) asparagine glycans are attached at residues N1040, N1066, and N1075. The region spanning I1062 to T1300 is the ABC transporter 2 domain. G1096 to T1103 serves as a coordination point for ATP. N1125 carries an N-linked (GlcNAc...) asparagine glycan.

This sequence belongs to the ABC transporter superfamily. ABCB family. Multidrug resistance exporter (TC 3.A.1.201) subfamily.

The protein localises to the membrane. ABC transporter; part of the gene cluster that mediates the biosynthesis of the lipopeptides W493 A and B. W493 A and B consist of six amino acid residues D-allo-thr, L-Ala, D-Ala, L-Gln, D-Tyr, and L-Val/L-Ile linked to a 3-hydroxy-4-methyltetradecanoic acid polyketide chain. May be involved in excretion or internal transport of W493 A and B. The protein is ABC transporter FPSE_09185 of Fusarium pseudograminearum (strain CS3096) (Wheat and barley crown-rot fungus).